The primary structure comprises 256 residues: Global transcriptional regulator CodY (256 aa).

Positions 1–155 are GAF domain; the sequence is MSLLSKTREL…AATVIGMEIL (155 aa). Positions 203 to 222 form a DNA-binding region, H-T-H motif; it reads ASKVADRVGITRSVIVNALR.

It belongs to the CodY family.

It is found in the cytoplasm. In terms of biological role, DNA-binding global transcriptional regulator which is involved in the adaptive response to starvation and acts by directly or indirectly controlling the expression of numerous genes in response to nutrient availability. During rapid exponential growth, CodY is highly active and represses genes whose products allow adaptation to nutrient depletion. The polypeptide is Global transcriptional regulator CodY (Staphylococcus epidermidis (strain ATCC 35984 / DSM 28319 / BCRC 17069 / CCUG 31568 / BM 3577 / RP62A)).